A 1038-amino-acid polypeptide reads, in one-letter code: Importin-7 (1038 aa).

M1 is modified (N-acetylmethionine). In terms of domain architecture, Importin N-terminal spans 22–101; sequence AERQLNEAHK…RENIVEAIIH (80 aa). The disordered stretch occupies residues 881-910; that stretch reads EHENDSDDDDEAEDDDETEELGSDEDDIDE. Over residues 884-910 the composition is skewed to acidic residues; that stretch reads NDSDDDDEAEDDDETEELGSDEDDIDE. At S886 the chain carries Phosphoserine. T898 carries the phosphothreonine modification. A phosphoserine mark is found at S903 and S1020.

Belongs to the importin beta family. In terms of assembly, forms a heterodimer with KPNB1. Interacts with histone H1. Interacts with H2A, H2B, H3 and H4 histones. Interacts with SNUPN and XPO1. Interacts with RPS7 and RPL5. Interacts with RPL23A (via BIB domain). Binds directly to nuclear pore complexes. Interacts with SMAD4 and NUP93; translocates SMAD4 to the nucleus through the NPC upon BMP7 stimulation resulting in activation of SMAD4 signaling. Interacts with phosphorylated SMAD2; the interaction facilitates translocation of SMAD2 to the nucleus. Interacts with SRP19. Interacts with RUNX2; the interaction inhibits RUNX2 nuclear translocation in osteoblasts. Interacts with HDAC6, DLX3 and KLF4; the interaction facilitates HDAC6, DLX3 and KLF4 nuclear translocation in dental papilla cells. As to quaternary structure, (Microbial infection) Interacts with HIV-1 reverse transcription complex integrase and rev.

It localises to the cytoplasm. The protein localises to the nucleus. Functionally, functions in nuclear protein import, either by acting as autonomous nuclear transport receptor or as an adapter-like protein in association with the importin-beta subunit KPNB1. Acting autonomously, is thought to serve itself as receptor for nuclear localization signals (NLS) and to promote translocation of import substrates through the nuclear pore complex (NPC) by an energy requiring, Ran-dependent mechanism. At the nucleoplasmic side of the NPC, Ran binds to importin, the importin/substrate complex dissociates and importin is re-exported from the nucleus to the cytoplasm where GTP hydrolysis releases Ran. The directionality of nuclear import is thought to be conferred by an asymmetric distribution of the GTP- and GDP-bound forms of Ran between the cytoplasm and nucleus. Mediates autonomously the nuclear import of ribosomal proteins RPL23A, RPS7 and RPL5. In association with KPNB1 mediates the nuclear import of H1 histone and the Ran-binding site of IPO7 is not required but synergizes with that of KPNB1 in importin/substrate complex dissociation. Promotes odontoblast differentiation via promoting nuclear translocation of DLX3, KLF4, SMAD2, thereby facilitating the transcription of target genes that play a role in odontoblast differentiation. Facilitates BMP4-induced translocation of SMAD1 to the nucleus and recruitment to the MSX1 gene promoter, thereby promotes the expression of the odontogenic regulator MSX1 in dental mesenchymal cells. Also promotes odontoblast differentiation by facilitating the nuclear translocation of HDAC6 and subsequent repression of RUNX2 expression. Inhibits osteoblast differentiation by inhibiting nuclear translocation of RUNX2 and therefore inhibition of RUNX2 target gene transcription. In vitro, mediates nuclear import of H2A, H2B, H3 and H4 histones. In terms of biological role, (Microbial infection) Mediates the nuclear import of HIV-1 reverse transcription complex (RTC) integrase. Binds and mediates the nuclear import of HIV-1 Rev. The protein is Importin-7 (IPO7) of Homo sapiens (Human).